Here is a 126-residue protein sequence, read N- to C-terminus: CD59 glycoprotein (126 aa).

An N-terminal signal peptide occupies residues 1–25; sequence MGIQGGSVLFGLLLALAVFCHSGHS. A UPAR/Ly6 domain is found at 26–106; it reads LQCYNCPNPT…QLENGGTSLS (81 aa). Disulfide bonds link Cys-28–Cys-51, Cys-31–Cys-38, Cys-44–Cys-64, Cys-70–Cys-88, and Cys-89–Cys-94. Asn-43 carries an N-linked (GlcNAc...) asparagine glycan. Asn-100 carries the GPI-anchor amidated asparagine lipid modification. Positions 101-126 are cleaved as a propeptide — removed in mature form; sequence GGTSLSEKTVLLLVTPLLAAAWCLHP.

Interacts with T-cell surface antigen CD2. N- and O-glycosylated.

It is found in the cell membrane. It localises to the secreted. Functionally, potent inhibitor of the complement membrane attack complex (MAC) action, which protects self-cells from damage during complement activation. Acts by binding to the beta-haipins of C8 (C8A and C8B) components of the assembling MAC, forming an intermolecular beta-sheet that prevents incorporation of the multiple copies of C9 required for complete formation of the osmolytic pore. The polypeptide is CD59 glycoprotein (Papio sp. (Baboon)).